Consider the following 593-residue polypeptide: Proline--tRNA ligase (593 aa).

It belongs to the class-II aminoacyl-tRNA synthetase family. ProS type 1 subfamily. In terms of assembly, homodimer.

It localises to the cytoplasm. It catalyses the reaction tRNA(Pro) + L-proline + ATP = L-prolyl-tRNA(Pro) + AMP + diphosphate. Functionally, catalyzes the attachment of proline to tRNA(Pro) in a two-step reaction: proline is first activated by ATP to form Pro-AMP and then transferred to the acceptor end of tRNA(Pro). As ProRS can inadvertently accommodate and process non-cognate amino acids such as alanine and cysteine, to avoid such errors it has two additional distinct editing activities against alanine. One activity is designated as 'pretransfer' editing and involves the tRNA(Pro)-independent hydrolysis of activated Ala-AMP. The other activity is designated 'posttransfer' editing and involves deacylation of mischarged Ala-tRNA(Pro). The misacylated Cys-tRNA(Pro) is not edited by ProRS. This is Proline--tRNA ligase from Synechococcus sp. (strain CC9902).